The sequence spans 345 residues: uncharacterized protein (345 aa).

The protein localises to the plastid. The protein resides in the chloroplast. This is an uncharacterized protein from Chlamydomonas moewusii (Chlamydomonas eugametos).